The sequence spans 711 residues: Hydroperoxide isomerase ALOXE3 (711 aa).

The PLAT domain maps to 2-119 (AVYRLCVTTG…TVELRPGTAR (118 aa)). Residues 119 to 711 (RTICQDALPL…PPLIENSVSI (593 aa)) enclose the Lipoxygenase domain. Fe cation contacts are provided by His408, His413, His588, Asn592, and Ile711.

Belongs to the lipoxygenase family. Requires Fe cation as cofactor.

The protein resides in the cytoplasm. It carries out the reaction a hydroperoxyeicosatetraenoate = a hydroxy-epoxy-eicosatetraenoate. The enzyme catalyses a hydroperoxyeicosatetraenoate = an oxoeicosatetraenoate + H2O. It catalyses the reaction (12R)-hydroperoxy-(5Z,8Z,10E,14Z)-eicosatetraenoate = (8R)-hydroxy-(11R,12R)-epoxy-(5Z,9E,14Z)-eicosatrienoate. The catalysed reaction is (12S)-hydroperoxy-(5Z,8Z,10E,14Z)-eicosatetraenoate = (8R)-hydroxy-(11S,12S)-epoxy-(5Z,9E,14Z)-eicosatrienoate. It carries out the reaction (12S)-hydroperoxy-(5Z,8Z,10E,14Z)-eicosatetraenoate = (10R)-hydroxy-(11S,12S)-epoxy-(5Z,8Z,14Z)-eicosatrienoate. The enzyme catalyses (15S)-hydroperoxy-(5Z,8Z,11Z,13E)-eicosatetraenoate = (13R)-hydroxy-(14S,15S)-epoxy-(5Z,8Z,11Z)-eicosatrienoate. It catalyses the reaction (5S)-hydroperoxy-(6E,8Z,11Z,14Z)-eicosatetraenoate = 7R-hydroxy-5S,6S-epoxy-(8Z,11Z,14Z)-eicosatrienoate. The catalysed reaction is (13S)-hydroperoxy-(9Z,11E)-octadecadienoate = 11-hydroxy-(12S,13S)-epoxy-(9Z)-octadecenoate. It carries out the reaction N-[omega-(9R)-hydroperoxy-(10E,12Z)-octadecadienoyloxy]acyl-beta-D-glucosyl-(1&lt;-&gt;1)-octadecasphing-4E-enine = a N-[omega-(9R,10R)-epoxy-(13R)-hydroxy-(11E)-octadecenoyloxy]acyl-beta-D-glucosyl-(1&lt;-&gt;1)-sphing-4E-enine. The enzyme catalyses a N-[omega-(9R)-hydroperoxy-(10E,12Z)-octadecadienoyloxy]-acylsphin-4E-enine = a N-[omega-(9R,10R)-epoxy-(13R)-hydroxy-(11E)-octadecenoyloxy]-acylsphing-4E-enine. It catalyses the reaction (12R)-hydroperoxy-(5Z,8Z,10E,14Z)-eicosatetraenoate = 12-oxo-(5Z,8Z,10E,14Z)-eicosatetraenoate + H2O. The catalysed reaction is (12S)-hydroperoxy-(5Z,8Z,10E,14Z)-eicosatetraenoate = 12-oxo-(5Z,8Z,10E,14Z)-eicosatetraenoate + H2O. It carries out the reaction (15S)-hydroperoxy-(5Z,8Z,11Z,13E)-eicosatetraenoate = 15-oxo-(5Z,8Z,11Z,13E)-eicosatetraenoate + H2O. The enzyme catalyses (13S)-hydroperoxy-(9Z,11E)-octadecadienoate = 13-oxo-(9Z,11E)-octadecadienoate + H2O. It catalyses the reaction (8S)-hydroperoxy-(5Z,9E,11Z,14Z)-eicosatetraenoate = (10R)-hydroxy-(8S,9S)-epoxy-(5Z,11Z,14Z)-eicosatrienoate. The catalysed reaction is (8R)-hydroperoxy-(5Z,9E,11Z,14Z)-eicosatetraenoate = 8-oxo-(5Z,9E,11Z,14Z)-eicosatetraenoate + H2O. It carries out the reaction (8S)-hydroperoxy-(5Z,9E,11Z,14Z)-eicosatetraenoate = 8-oxo-(5Z,9E,11Z,14Z)-eicosatetraenoate + H2O. The protein operates within lipid metabolism; hydroperoxy eicosatetraenoic acid biosynthesis. It functions in the pathway lipid metabolism; sphingolipid metabolism. Non-heme iron-containing lipoxygenase which is atypical in that it displays a prominent hydroperoxide isomerase activity and a reduced lipoxygenases activity. The hydroperoxide isomerase activity catalyzes the isomerization of hydroperoxides, derived from arachidonic and linoleic acid by ALOX12B, into hepoxilin-type epoxyalcohols and ketones. In presence of oxygen, oxygenates polyunsaturated fatty acids, including arachidonic acid, to produce fatty acid hydroperoxides. In the skin, acts downstream of ALOX12B on the linoleate moiety of esterified omega-hydroxyacyl-sphingosine (EOS) ceramides to produce an epoxy-ketone derivative, a crucial step in the conjugation of omega-hydroxyceramide to membrane proteins. Therefore plays a crucial role in the synthesis of corneocytes lipid envelope and the establishment of the skin barrier to water loss. In parallel, it may have a signaling function in barrier formation through the production of hepoxilins metabolites. Also plays a role in adipocyte differentiation through hepoxilin A3 and hepoxilin B3 production which in turn activate PPARG. Through the production of hepoxilins in the spinal cord, it may regulate inflammatory tactile allodynia. This Rattus norvegicus (Rat) protein is Hydroperoxide isomerase ALOXE3.